The sequence spans 346 residues: Peripherin-2 (346 aa).

The Cytoplasmic segment spans residues 1-24 (MALLKVKFDQKKRVKLAQGLWLMN). Residues 25–43 (WLSVLAGIVIFSLGLFLKI) traverse the membrane as a helical segment. Residues 44–61 (ELRKRSDVMNNSESHFVP) are Lumenal-facing. N-linked (GlcNAc...) asparagine glycosylation is present at asparagine 53. Residues 62–80 (NSLIVMGVLSCVFNSLAGK) form a helical membrane-spanning segment. Residues 81-99 (ICYDALDPAKYAKWKPWLK) are Cytoplasmic-facing. Residues 100 to 123 (PYLAVCVLFNIALFLVTLCCFLMR) form a helical membrane-spanning segment. Residues 124–264 (GSLESTLAHG…LSYYSSLMNS (141 aa)) are Lumenal-facing. Asparagine 229 is a glycosylation site (N-linked (GlcNAc...) asparagine). The chain crosses the membrane as a helical span at residues 265–290 (MGAVTLLVWLFEVTITIGLRYLHTAL). Topologically, residues 291-346 (EGVSNPEDPECESEGWLLEKSVSETWKAFLESLKKLGKSNQVEAEGADAGQAPEAG) are cytoplasmic. An interaction with MREG region spans residues 341-346 (QAPEAG).

It belongs to the PRPH2/ROM1 family. As to quaternary structure, homodimer; disulfide-linked. Forms a homotetramer. Forms a heterotetramer with ROM1. Homotetramer and heterotetramer core complexes go on to form higher order complexes by formation of intermolecular disulfide bonds. Interacts with MREG. Interacts with STX3. Interacts with SNAP25. As to expression, retina (photoreceptor). In rim region of ROS (rod outer segment) disks.

The protein resides in the membrane. Its subcellular location is the cell projection. It is found in the cilium. It localises to the photoreceptor outer segment. The protein localises to the photoreceptor inner segment. Its function is as follows. Essential for retina photoreceptor outer segment disk morphogenesis, may also play a role with ROM1 in the maintenance of outer segment disk structure. Required for the maintenance of retinal outer nuclear layer thickness. Required for the correct development and organization of the photoreceptor inner segment. The chain is Peripherin-2 (PRPH2) from Canis lupus familiaris (Dog).